A 259-amino-acid chain; its full sequence is UPF0246 protein MADE_1015435 (259 aa).

This sequence belongs to the UPF0246 family.

The polypeptide is UPF0246 protein MADE_1015435 (Alteromonas mediterranea (strain DSM 17117 / CIP 110805 / LMG 28347 / Deep ecotype)).